Reading from the N-terminus, the 240-residue chain is Small ribosomal subunit protein uS3 (240 aa).

The 70-residue stretch at 39–108 folds into the KH type-2 domain; the sequence is LRKFLKKKLY…ELILNIKEER (70 aa). A compositionally biased stretch (basic and acidic residues) spans 213-224; the sequence is MNSDDTATPERK. The segment at 213-240 is disordered; it reads MNSDDTATPERKAPRRRKGRRNVNAKKN. Positions 225-240 are enriched in basic residues; it reads APRRRKGRRNVNAKKN.

This sequence belongs to the universal ribosomal protein uS3 family. As to quaternary structure, part of the 30S ribosomal subunit. Forms a tight complex with proteins S10 and S14.

Functionally, binds the lower part of the 30S subunit head. Binds mRNA in the 70S ribosome, positioning it for translation. The polypeptide is Small ribosomal subunit protein uS3 (Nautilia profundicola (strain ATCC BAA-1463 / DSM 18972 / AmH)).